An 82-amino-acid polypeptide reads, in one-letter code: Auxin-induced protein X15 (82 aa).

Belongs to the ARG7 family.

In Glycine max (Soybean), this protein is Auxin-induced protein X15.